A 399-amino-acid chain; its full sequence is Imidazolonepropionase (399 aa).

His-74 and His-76 together coordinate Fe(3+). Residues His-74 and His-76 each contribute to the Zn(2+) site. 4-imidazolone-5-propanoate contacts are provided by Arg-83, Tyr-146, and His-176. Tyr-146 provides a ligand contact to N-formimidoyl-L-glutamate. His-238 contributes to the Fe(3+) binding site. His-238 contributes to the Zn(2+) binding site. 4-imidazolone-5-propanoate is bound at residue Gln-241. Asp-312 contributes to the Fe(3+) binding site. A Zn(2+)-binding site is contributed by Asp-312. Residues Asn-314 and Gly-316 each coordinate N-formimidoyl-L-glutamate. Residue Ser-317 participates in 4-imidazolone-5-propanoate binding.

The protein belongs to the metallo-dependent hydrolases superfamily. HutI family. Zn(2+) serves as cofactor. The cofactor is Fe(3+).

Its subcellular location is the cytoplasm. It carries out the reaction 4-imidazolone-5-propanoate + H2O = N-formimidoyl-L-glutamate. Its pathway is amino-acid degradation; L-histidine degradation into L-glutamate; N-formimidoyl-L-glutamate from L-histidine: step 3/3. In terms of biological role, catalyzes the hydrolytic cleavage of the carbon-nitrogen bond in imidazolone-5-propanoate to yield N-formimidoyl-L-glutamate. It is the third step in the universal histidine degradation pathway. In Deinococcus deserti (strain DSM 17065 / CIP 109153 / LMG 22923 / VCD115), this protein is Imidazolonepropionase.